The sequence spans 250 residues: tRNA (guanine-N(1)-)-methyltransferase (250 aa).

Residues Gly113 and 133–138 (IGDYVL) contribute to the S-adenosyl-L-methionine site.

Belongs to the RNA methyltransferase TrmD family. As to quaternary structure, homodimer.

It localises to the cytoplasm. The catalysed reaction is guanosine(37) in tRNA + S-adenosyl-L-methionine = N(1)-methylguanosine(37) in tRNA + S-adenosyl-L-homocysteine + H(+). Its function is as follows. Specifically methylates guanosine-37 in various tRNAs. The sequence is that of tRNA (guanine-N(1)-)-methyltransferase from Shewanella amazonensis (strain ATCC BAA-1098 / SB2B).